A 105-amino-acid chain; its full sequence is MTTEKIDGVSVTARANVYFDGKCVSHGITFPDGTKKSVGVILPATLTFNTGAPEIMECVGGACEYKLDGTDAWVKSGEGDKFSVPGNSKFEIRVTEAYHYICHFG.

It belongs to the nucleoside phosphorylase PpnP family.

It carries out the reaction a purine D-ribonucleoside + phosphate = a purine nucleobase + alpha-D-ribose 1-phosphate. The enzyme catalyses adenosine + phosphate = alpha-D-ribose 1-phosphate + adenine. It catalyses the reaction cytidine + phosphate = cytosine + alpha-D-ribose 1-phosphate. The catalysed reaction is guanosine + phosphate = alpha-D-ribose 1-phosphate + guanine. It carries out the reaction inosine + phosphate = alpha-D-ribose 1-phosphate + hypoxanthine. The enzyme catalyses thymidine + phosphate = 2-deoxy-alpha-D-ribose 1-phosphate + thymine. It catalyses the reaction uridine + phosphate = alpha-D-ribose 1-phosphate + uracil. The catalysed reaction is xanthosine + phosphate = alpha-D-ribose 1-phosphate + xanthine. Functionally, catalyzes the phosphorolysis of diverse nucleosides, yielding D-ribose 1-phosphate and the respective free bases. Can use uridine, adenosine, guanosine, cytidine, thymidine, inosine and xanthosine as substrates. Also catalyzes the reverse reactions. In Paracidovorax citrulli (strain AAC00-1) (Acidovorax citrulli), this protein is Pyrimidine/purine nucleoside phosphorylase.